The primary structure comprises 118 residues: Large ribosomal subunit protein bL20 (118 aa).

It belongs to the bacterial ribosomal protein bL20 family.

Its function is as follows. Binds directly to 23S ribosomal RNA and is necessary for the in vitro assembly process of the 50S ribosomal subunit. It is not involved in the protein synthesizing functions of that subunit. This chain is Large ribosomal subunit protein bL20, found in Francisella tularensis subsp. holarctica (strain FTNF002-00 / FTA).